The primary structure comprises 539 residues: MVADPPKGDPKGYAAAEPTANGVSMLVPIEDVGSLKGGRCGSGDQVRRCLRANLLVLLTVVAVVAGVALGLGVSGAGGAFALGPARLEAFSFPGELLLRLLKMIILPLVVCSLIGGAASLDPSALGRLGAWALLFFLVTTLLASALGVGLALALQPGAAFAAINTSVGAPVEEAPSKEVLDSFLDLVRNIFPSNLVSAAFRSYTTSYKERLFNGTLVKVPTGGEVEGMNILGLVVFAIIFGVALRKLGPEGELLIRFFNSFNDATMVLVSWIMWYAPVGILFLVAGKIVEMENVGLLFASLGKYILCCLLGHAIHGLLTLPLIYFLFARKNPYRFLWGIMTPLATAFGTSSSSATLPLMMKCVEEKNGVARHISRFILPIGATVNMDGAALFQCVAAVFIAQLNHRSLDFVKIITILVTATASSVGAAGIPSGGVLTLAIILEAVNLPVHDISLILAVDWLVDRSCTVLNVEGDAFGAGLLQSYLDRTENCNSVPELIQVKSEMPLAALPVPGEEGNPLLKGCPGPAGDADTCEKESVM.

At Met-1 the chain carries N-acetylmethionine. The Cytoplasmic segment spans residues 1-52; it reads MVADPPKGDPKGYAAAEPTANGVSMLVPIEDVGSLKGGRCGSGDQVRRCLRA. Residues 53 to 82 form a helical membrane-spanning segment; the sequence is NLLVLLTVVAVVAGVALGLGVSGAGGAFAL. At 83 to 95 the chain is on the extracellular side; sequence GPARLEAFSFPGE. Residues 96–117 form a helical membrane-spanning segment; sequence LLLRLLKMIILPLVVCSLIGGA. Over 118 to 131 the chain is Cytoplasmic; the sequence is ASLDPSALGRLGAW. The helical transmembrane segment at 132 to 154 threads the bilayer; the sequence is ALLFFLVTTLLASALGVGLALAL. The Extracellular segment spans residues 155-223; sequence QPGAAFAAIN…GTLVKVPTGG (69 aa). N-linked (GlcNAc...) asparagine glycans are attached at residues Asn-164 and Asn-213. The helical transmembrane segment at 224–247 threads the bilayer; the sequence is EVEGMNILGLVVFAIIFGVALRKL. At 248–256 the chain is on the cytoplasmic side; it reads GPEGELLIR. The helical transmembrane segment at 257–284 threads the bilayer; that stretch reads FFNSFNDATMVLVSWIMWYAPVGILFLV. At 285 to 305 the chain is on the extracellular side; sequence AGKIVEMENVGLLFASLGKYI. Residues 306 to 327 form a helical membrane-spanning segment; it reads LCCLLGHAIHGLLTLPLIYFLF. Topologically, residues 328–332 are cytoplasmic; sequence ARKNP. Residues 333 to 363 constitute an intramembrane region (discontinuously helical); sequence YRFLWGIMTPLATAFGTSSSSATLPLMMKCV. The Cytoplasmic segment spans residues 364–372; that stretch reads EEKNGVARH. Residues 373–399 form a helical membrane-spanning segment; that stretch reads ISRFILPIGATVNMDGAALFQCVAAVF. Na(+)-binding residues include Gly-381, Thr-383, and Asn-385. Residues 400 to 412 lie on the Extracellular side of the membrane; sequence IAQLNHRSLDFVK. An intramembrane region (discontinuously helical) is located at residues 413–446; it reads IITILVTATASSVGAAGIPSGGVLTLAIILEAVN. The Extracellular segment spans residues 447 to 459; it reads LPVHDISLILAVD. A helical transmembrane segment spans residues 460 to 481; it reads WLVDRSCTVLNVEGDAFGAGLL. Na(+) is bound by residues Asn-470 and Asp-474. Residues 482–539 are Cytoplasmic-facing; sequence QSYLDRTENCNSVPELIQVKSEMPLAALPVPGEEGNPLLKGCPGPAGDADTCEKESVM. 3 positions are modified to phosphoserine: Ser-493, Ser-502, and Ser-537. The disordered stretch occupies residues 518-539; the sequence is PLLKGCPGPAGDADTCEKESVM.

It belongs to the dicarboxylate/amino acid:cation symporter (DAACS) (TC 2.A.23) family. SLC1A5 subfamily. In terms of assembly, homotrimer.

It localises to the cell membrane. Its subcellular location is the melanosome. It catalyses the reaction L-glutamine(out) + L-serine(in) + Na(+)(out) = L-glutamine(in) + L-serine(out) + Na(+)(in). The catalysed reaction is L-glutamine(in) + L-serine(out) + Na(+)(out) = L-glutamine(out) + L-serine(in) + Na(+)(in). It carries out the reaction L-threonine(in) + L-glutamine(out) + Na(+)(out) = L-threonine(out) + L-glutamine(in) + Na(+)(in). The enzyme catalyses L-threonine(out) + L-glutamine(in) + Na(+)(out) = L-threonine(in) + L-glutamine(out) + Na(+)(in). It catalyses the reaction L-asparagine(in) + L-glutamine(out) + Na(+)(out) = L-asparagine(out) + L-glutamine(in) + Na(+)(in). The catalysed reaction is L-asparagine(out) + L-glutamine(in) + Na(+)(out) = L-asparagine(in) + L-glutamine(out) + Na(+)(in). It carries out the reaction L-glutamine(in) + L-alanine(out) + Na(+)(out) = L-glutamine(out) + L-alanine(in) + Na(+)(in). The enzyme catalyses L-valine(out) + L-glutamine(in) + Na(+)(out) = L-valine(in) + L-glutamine(out) + Na(+)(in). It catalyses the reaction L-glutamine(in) + L-methionine(out) + Na(+)(out) = L-glutamine(out) + L-methionine(in) + Na(+)(in). The catalysed reaction is L-glutamine(in) + L-glutamate(out) + Na(+)(out) + H(+)(out) = L-glutamine(out) + L-glutamate(in) + Na(+)(in) + H(+)(in). It carries out the reaction D-serine(in) + L-glutamine(out) + Na(+)(out) = D-serine(out) + L-glutamine(in) + Na(+)(in). The enzyme catalyses D-serine(in) + L-alanine(out) + Na(+)(out) = D-serine(out) + L-alanine(in) + Na(+)(in). It catalyses the reaction nitrate(in) = nitrate(out). The catalysed reaction is iodide(out) = iodide(in). It carries out the reaction thiocyanate(in) = thiocyanate(out). Functionally, sodium-coupled antiporter of neutral amino acids. In a tri-substrate transport cycle, exchanges neutral amino acids between the extracellular and intracellular compartments, coupled to the inward cotransport of at least one sodium ion. The preferred substrate is the essential amino acid L-glutamine, a precursor for biosynthesis of proteins, nucleotides and amine sugars as well as an alternative fuel for mitochondrial oxidative phosphorylation. Exchanges L-glutamine with other neutral amino acids such as L-serine, L-threonine and L-asparagine in a bidirectional way. Provides L-glutamine to proliferating stem and activated cells driving the metabolic switch toward cell differentiation. The transport cycle is usually pH-independent, with the exception of L-glutamate. Transports extracellular L-glutamate coupled to the cotransport of one proton and one sodium ion in exchange for intracellular L-glutamine counter-ion. May provide for L-glutamate uptake in glial cells regulating glutamine/glutamate cycle in the nervous system. Can transport D-amino acids. Mediates D-serine release from the retinal glia potentially affecting NMDA receptor function in retinal neurons. Displays sodium- and amino acid-dependent but uncoupled channel-like anion conductance with a preference SCN(-) &gt;&gt; NO3(-) &gt; I(-) &gt; Cl(-). Through binding of the fusogenic protein syncytin-1/ERVW-1 may mediate trophoblasts syncytialization, the spontaneous fusion of their plasma membranes, an essential process in placental development. The sequence is that of Neutral amino acid transporter B(0) (SLC1A5) from Bos taurus (Bovine).